The following is a 377-amino-acid chain: O-phospho-L-seryl-tRNA:Cys-tRNA synthase (377 aa).

Pyridoxal 5'-phosphate contacts are provided by residues A82 to R83, N189, and S212 to H214. Residue K215 is modified to N6-(pyridoxal phosphate)lysine.

The protein belongs to the SepCysS family. Homodimer. Interacts with SepRS. It depends on pyridoxal 5'-phosphate as a cofactor.

It carries out the reaction O-phospho-L-seryl-tRNA(Cys) + hydrogen sulfide + H(+) = L-cysteinyl-tRNA(Cys) + phosphate. Converts O-phospho-L-seryl-tRNA(Cys) (Sep-tRNA(Cys)) to L-cysteinyl-tRNA(Cys) (Cys-tRNA(Cys)). This is O-phospho-L-seryl-tRNA:Cys-tRNA synthase from Methanocaldococcus jannaschii (strain ATCC 43067 / DSM 2661 / JAL-1 / JCM 10045 / NBRC 100440) (Methanococcus jannaschii).